A 212-amino-acid polypeptide reads, in one-letter code: FMN-dependent NAD(P)H:quinone oxidoreductase 1 (212 aa).

FMN-binding positions include Ser-10, Ser-16–Ser-18, and Met-97–Phe-100. 2 residues coordinate substrate: Asn-99 and Tyr-131. Residues Ser-145 to Gly-148 and Glu-187 each bind FMN. Position 188 (Glu-188) interacts with substrate.

This sequence belongs to the azoreductase type 1 family. Homodimer. Homotetramer formed by a dimer of dimers when the ionic strength is high. FMN serves as cofactor.

The enzyme catalyses 2 a quinone + NADPH + H(+) = 2 a 1,4-benzosemiquinone + NADP(+). It carries out the reaction 2 a quinone + NADH + H(+) = 2 a 1,4-benzosemiquinone + NAD(+). It catalyses the reaction N,N-dimethyl-1,4-phenylenediamine + anthranilate + 2 NAD(+) = 2-(4-dimethylaminophenyl)diazenylbenzoate + 2 NADH + 2 H(+). Azoreductase activity increases with salt strength. Functionally, quinone reductase that provides resistance to thiol-specific stress caused by electrophilic quinones. Shows a preference for benzoquinones. Also exhibits azoreductase activity. Catalyzes the reductive cleavage of the azo bond in aromatic azo compounds to the corresponding amines. NADPH is the preferred electron donor for azoreductase activity, but it can also use NADH. Can reduce different classes of azo dyes, including the common azo dyes methyl red and p-aminoazobenzene sulfonamide (PAABSA). Can activate several azo pro-drugs used in the treatment of inflammatory bowel disease (IBD), including balsalazide, sulfasalazine and olsalazine. Also acts as a nitrodeductase, and can reduce and hence activate the nitroaromatic drug nitrofurazone, a broad spectrum antibiotic. This is FMN-dependent NAD(P)H:quinone oxidoreductase 1 from Pseudomonas aeruginosa (strain ATCC 15692 / DSM 22644 / CIP 104116 / JCM 14847 / LMG 12228 / 1C / PRS 101 / PAO1).